The sequence spans 513 residues: Histidine--tRNA ligase (513 aa).

The N-terminal 24 residues, 1–24 (MADKAQLQEAIKTQGEVVRKLKSE), are a transit peptide targeting the mitochondrion. Residues 3 to 59 (DKAQLQEAIKTQGEVVRKLKSEKASKEQIDEEVARLLQLKAQLGGDEGKHVFVLKTA) enclose the WHEP-TRS domain. Residues 130–132 (DLT), Arg-157, Gln-173, Asp-177, Arg-326, and 330–331 (YY) each bind L-histidine.

It belongs to the class-II aminoacyl-tRNA synthetase family.

It is found in the cytoplasm. Its subcellular location is the mitochondrion. It carries out the reaction tRNA(His) + L-histidine + ATP = L-histidyl-tRNA(His) + AMP + diphosphate + H(+). Its function is as follows. Catalyzes the aminoacylation of histidyl-tRNA. The protein is Histidine--tRNA ligase of Danio rerio (Zebrafish).